We begin with the raw amino-acid sequence, 222 residues long: Probable nicotinate-nucleotide adenylyltransferase (222 aa).

Belongs to the NadD family.

It catalyses the reaction nicotinate beta-D-ribonucleotide + ATP + H(+) = deamido-NAD(+) + diphosphate. The protein operates within cofactor biosynthesis; NAD(+) biosynthesis; deamido-NAD(+) from nicotinate D-ribonucleotide: step 1/1. In terms of biological role, catalyzes the reversible adenylation of nicotinate mononucleotide (NaMN) to nicotinic acid adenine dinucleotide (NaAD). This is Probable nicotinate-nucleotide adenylyltransferase from Pseudomonas syringae pv. tomato (strain ATCC BAA-871 / DC3000).